The primary structure comprises 193 residues: Acyl-homoserine-lactone synthase (193 aa).

It belongs to the autoinducer synthase family.

The catalysed reaction is a fatty acyl-[ACP] + S-adenosyl-L-methionine = an N-acyl-L-homoserine lactone + S-methyl-5'-thioadenosine + holo-[ACP] + H(+). In terms of biological role, required for the synthesis of N-(3-oxodecanoyl)-L-homoserine lactone (ODHL), an autoinducer molecule which binds to VanR. The sequence is that of Acyl-homoserine-lactone synthase (vanI) from Vibrio anguillarum (Listonella anguillarum).